We begin with the raw amino-acid sequence, 85 residues long: Small ribosomal subunit protein uS15c (85 aa).

It belongs to the universal ribosomal protein uS15 family. As to quaternary structure, part of the 30S ribosomal subunit.

Its subcellular location is the plastid. The protein resides in the chloroplast. The protein is Small ribosomal subunit protein uS15c (rps15) of Chaetosphaeridium globosum (Charophycean green alga).